The following is a 215-amino-acid chain: MATGDDIPTFKLVLVGDGGTGKTTFVKRHLTGDPEKKYVATLGVEVHPLIFHTNRGQIRFNVWDTAGQEKFGGLRDGYYIQGQCAIIMFDVTARVTYKNVPNWHRDLARVCENIPIVLCGNFVDVKDRKVKAKTITFHRKKNLQYYDISAKSNYNFEKPSLWLVRKLLGDPNLEFVAMPALAPPEVQMDPTMVAQYEQEIAAAANAELPDDDEDL.

The Small GTPase Ran-type domain occupies 6–170 (DIPTFKLVLV…LWLVRKLLGD (165 aa)). Residues 17–24 (DGGTGKTT), 35–41 (EKKYVAT), glycine 67, 121–124 (NFVD), and 149–151 (SAK) contribute to the GTP site. Residues 36 to 44 (KKYVATLGV) are switch-I. The interval 67-83 (GQEKFGGLRDGYYIQGQ) is switch-II. The interval 210-215 (DDDEDL) is interaction with RANBP1.

This sequence belongs to the small GTPase superfamily. Ran family. Monomer. Interacts with RANGAP1, which promotes RAN-mediated GTP hydrolysis. Interacts with KPNB1. Interaction with KPNB1 inhibits RANGAP1-mediated stimulation of GTPase activity. Interacts with RCC1 which promotes the exchange of RAN-bound GDP by GTP. Interaction with KPNB1 inhibits RCC1-mediated exchange of RAN-bound GDP by GTP. Interacts (GTP-bound form) with TNPO1; the interaction is direct. Interacts with KPNB1 and with TNPO1; both inhibit RAN GTPase activity. Interacts (via C-terminus) with RANBP1, which alleviates the inhibition of RAN GTPase activity. Interacts with RANGRF, which promotes the release of bound guanine nucleotide. RANGRF and RCC1 compete for an overlapping binding site on RAN. Identified in a complex with KPNA2 and CSE1L; interaction with RANBP1 mediates dissociation of RAN from this complex. Interaction with both RANBP1 and KPNA2 promotes dissociation of the complex between RAN and KPNB1. Identified in a complex composed of RAN, RANGAP1 and RANBP1. Identified in a complex that contains TNPO1, RAN and RANBP1. Identified in a nuclear export complex with XPO1. Interaction with RANBP1 or RANBP2 induces a conformation change in the complex formed by XPO1 and RAN that triggers the release of the nuclear export signal of cargo proteins. Component of a nuclear export receptor complex composed of KPNB1, RAN, SNUPN and XPO1. The cofactor is Mg(2+).

The protein resides in the nucleus. It localises to the nucleus envelope. Its subcellular location is the cytoplasm. It is found in the cytosol. Functionally, GTPase involved in nucleocytoplasmic transport, participating both to the import and the export from the nucleus of proteins and RNAs. Switches between a cytoplasmic GDP- and a nuclear GTP-bound state by nucleotide exchange and GTP hydrolysis. Nuclear import receptors such as importin beta bind their substrates only in the absence of GTP-bound RAN and release them upon direct interaction with GTP-bound RAN, while export receptors behave in the opposite way. Thereby, RAN controls cargo loading and release by transport receptors in the proper compartment and ensures the directionality of the transport. Interaction with RANBP1 induces a conformation change in the complex formed by XPO1 and RAN that triggers the release of the nuclear export signal of cargo proteins. RAN (GTP-bound form) triggers microtubule assembly at mitotic chromosomes and is required for normal mitotic spindle assembly and chromosome segregation. Required for normal progress through mitosis. The chain is GTP-binding nuclear protein Ran (ran-1) from Onchocerca volvulus.